The following is a 114-amino-acid chain: NADH-ubiquinone oxidoreductase chain 3 (114 aa).

3 helical membrane passes run 1 to 21, 55 to 75, and 85 to 105; these read MIFY…MLFF, FFFV…ILPF, and MFVF…LYEF.

It belongs to the complex I subunit 3 family.

The protein localises to the mitochondrion membrane. It catalyses the reaction a ubiquinone + NADH + 5 H(+)(in) = a ubiquinol + NAD(+) + 4 H(+)(out). In terms of biological role, core subunit of the mitochondrial membrane respiratory chain NADH dehydrogenase (Complex I) that is believed to belong to the minimal assembly required for catalysis. Complex I functions in the transfer of electrons from NADH to the respiratory chain. The immediate electron acceptor for the enzyme is believed to be ubiquinone. The chain is NADH-ubiquinone oxidoreductase chain 3 (ND3) from Rhipicephalus sanguineus (Brown dog tick).